The sequence spans 245 residues: tRNA pseudouridine synthase A 2 (245 aa).

Asp53 serves as the catalytic Nucleophile. Substrate is bound at residue Tyr111.

Belongs to the tRNA pseudouridine synthase TruA family. In terms of assembly, homodimer.

It carries out the reaction uridine(38/39/40) in tRNA = pseudouridine(38/39/40) in tRNA. Formation of pseudouridine at positions 38, 39 and 40 in the anticodon stem and loop of transfer RNAs. This is tRNA pseudouridine synthase A 2 from Bacillus cereus (strain ZK / E33L).